The primary structure comprises 83 residues: U5-theraphotoxin-Hs1a 5 (83 aa).

An N-terminal signal peptide occupies residues 1–21 (MKTSMFLTLTGLVLLFVVCYA). Positions 22-49 (SESEEKEFPKELPSSIFAADSDFKVEER) are excised as a propeptide. 3 disulfides stabilise this stretch: Cys51–Cys63, Cys56–Cys68, and Cys62–Cys75.

The protein belongs to the neurotoxin 10 (Hwtx-1) family. 51 (Hntx-8) subfamily. Hntx-8 sub-subfamily. As to expression, expressed by the venom gland.

The protein localises to the secreted. Functionally, agglutinates erythrocytes. The protein is U5-theraphotoxin-Hs1a 5 of Cyriopagopus schmidti (Chinese bird spider).